Here is a 312-residue protein sequence, read N- to C-terminus: Small ribosomal subunit biogenesis GTPase RsgA (312 aa).

The region spanning 86 to 245 (QSFLKRPAVA…LADTPGFNRP (160 aa)) is the CP-type G domain. GTP-binding positions include 135–138 (TKID) and 187–195 (GPSGVGKTS). The Zn(2+) site is built by C270, C275, H277, and C283.

This sequence belongs to the TRAFAC class YlqF/YawG GTPase family. RsgA subfamily. As to quaternary structure, monomer. Associates with 30S ribosomal subunit, binds 16S rRNA. Zn(2+) is required as a cofactor.

The protein localises to the cytoplasm. In terms of biological role, one of several proteins that assist in the late maturation steps of the functional core of the 30S ribosomal subunit. Helps release RbfA from mature subunits. May play a role in the assembly of ribosomal proteins into the subunit. Circularly permuted GTPase that catalyzes slow GTP hydrolysis, GTPase activity is stimulated by the 30S ribosomal subunit. The polypeptide is Small ribosomal subunit biogenesis GTPase RsgA (Prochlorococcus marinus (strain NATL2A)).